We begin with the raw amino-acid sequence, 150 residues long: Large ribosomal subunit protein bL9 (150 aa).

Belongs to the bacterial ribosomal protein bL9 family.

In terms of biological role, binds to the 23S rRNA. This is Large ribosomal subunit protein bL9 from Aromatoleum aromaticum (strain DSM 19018 / LMG 30748 / EbN1) (Azoarcus sp. (strain EbN1)).